The chain runs to 105 residues: ATPase inhibitor A, mitochondrial (105 aa).

Positions 17–52 (MSSDQLGELGTGAGKGGGGGGSVRAAGGSFGRREAA) are disordered. The tract at residues 22-51 (LGELGTGAGKGGGGGGSVRAAGGSFGRREA) is N-terminal inhibitory region. The segment covering 25–38 (LGTGAGKGGGGGGS) has biased composition (gly residues). Residues 58–105 (FRQKEREQLAALKNHHEEEIDHHKKEIERLQREIDRHKGKIRKLKHDD) adopt a coiled-coil conformation. The segment at 73–105 (HEEEIDHHKKEIERLQREIDRHKGKIRKLKHDD) is antiparallel alpha-helical coiled coil region.

Belongs to the ATPase inhibitor family. Homodimer; represents the active form and is present at a pH value below 6.5. Homotetramer; represents the inactive form and is present at a pH value above 7.0.

The protein resides in the mitochondrion. Endogenous F(1)F(o)-ATPase inhibitor limiting ATP depletion when the mitochondrial membrane potential falls below a threshold and the F(1)F(o)-ATP synthase starts hydrolyzing ATP to pump protons out of the mitochondrial matrix. Required to avoid the consumption of cellular ATP when the F(1)F(o)-ATP synthase enzyme acts as an ATP hydrolase. Indirectly acts as a regulator of heme synthesis in erythroid tissues: regulates heme synthesis by modulating the mitochondrial pH and redox potential, allowing fech to efficiently catalyze the incorporation of iron into protoporphyrin IX to produce heme. The protein is ATPase inhibitor A, mitochondrial of Danio rerio (Zebrafish).